The sequence spans 349 residues: Gibberellin 3-beta-dioxygenase 3 (349 aa).

Residues 201-305 (SIQSFLQLNS…RVSAAYFAGP (105 aa)) enclose the Fe2OG dioxygenase domain. Fe cation-binding residues include H226, D228, and H286. R296 is a catalytic residue.

This sequence belongs to the iron/ascorbate-dependent oxidoreductase family. GA3OX subfamily. L-ascorbate serves as cofactor. Fe cation is required as a cofactor. In terms of tissue distribution, expressed in flower clusters and siliques.

It catalyses the reaction gibberellin A20 + 2-oxoglutarate + O2 = gibberellin A1 + succinate + CO2. The protein operates within plant hormone biosynthesis; gibberellin biosynthesis. Converts the inactive gibberellin (GA) precursors GA9 and GA20 in the bioactives gibberellins GA4 and GA1. Involved in the production of bioactive GA for reproductive development. This chain is Gibberellin 3-beta-dioxygenase 3 (GA3OX3), found in Arabidopsis thaliana (Mouse-ear cress).